The sequence spans 624 residues: LEAF RUST 10 DISEASE-RESISTANCE LOCUS RECEPTOR-LIKE PROTEIN KINASE-like 2.2 (624 aa).

Residues 1-30 (MDYLSSMGSQTARFCLILLFLFYYLPCALS) form the signal peptide. Over 31–263 (QDDLWGCGTP…IPNTRSILIT (233 aa)) the chain is Extracellular. Residues Asn45, Asn75, Asn85, Asn95, Asn150, and Asn164 are each glycosylated (N-linked (GlcNAc...) asparagine). The helical transmembrane segment at 264 to 284 (IGQVVGFHVFIIVVMIIAFLF) threads the bilayer. At 285–624 (WRRKKVNDLR…EEDSSIYSEV (340 aa)) the chain is on the cytoplasmic side. A Protein kinase domain is found at 317–599 (KSFTEVVGRG…SLDPPPKPLL (283 aa)). ATP is bound by residues 323 to 331 (VGRGGFGTV) and Lys345. Asp434 serves as the catalytic Proton acceptor. The interval 587–624 (NLDSLDPPPKPLLHMPMQNNNAESSQPSEEDSSIYSEV) is disordered. Residues 603 to 624 (MQNNNAESSQPSEEDSSIYSEV) are compositionally biased toward polar residues.

It belongs to the protein kinase superfamily. Ser/Thr protein kinase family.

The protein resides in the membrane. The catalysed reaction is L-seryl-[protein] + ATP = O-phospho-L-seryl-[protein] + ADP + H(+). The enzyme catalyses L-threonyl-[protein] + ATP = O-phospho-L-threonyl-[protein] + ADP + H(+). This is LEAF RUST 10 DISEASE-RESISTANCE LOCUS RECEPTOR-LIKE PROTEIN KINASE-like 2.2 from Arabidopsis thaliana (Mouse-ear cress).